The following is a 175-amino-acid chain: Large ribosomal subunit protein uL10 (175 aa).

This sequence belongs to the universal ribosomal protein uL10 family. Part of the ribosomal stalk of the 50S ribosomal subunit. The N-terminus interacts with L11 and the large rRNA to form the base of the stalk. The C-terminus forms an elongated spine to which L12 dimers bind in a sequential fashion forming a multimeric L10(L12)X complex.

Functionally, forms part of the ribosomal stalk, playing a central role in the interaction of the ribosome with GTP-bound translation factors. The polypeptide is Large ribosomal subunit protein uL10 (Mycobacterium sp. (strain JLS)).